Reading from the N-terminus, the 553-residue chain is Telomere repeat-binding protein 2 (553 aa).

Residues 147–170 form a disordered region; the sequence is SSTEVGACGNGSPNESRDDVNLFS. The Ubiquitin-like domain occupies 285–364; the sequence is VKLRIKSFRV…HLDSLGFSLE (80 aa). Residues 394-413 are disordered; the sequence is ALDSSHEPEPSPADSFGKLG. Residues 448-507 form the HTH myb-type domain; sequence AQRRIRRPFSVTEVEALVQAVEKLGTGRWRDVKVRAFEDADHRTYVDLKDKWKTLVHTAR. Positions 476–503 form a DNA-binding region, H-T-H motif; that stretch reads WRDVKVRAFEDADHRTYVDLKDKWKTLV.

In terms of assembly, homodimer and heterodimer with TRP1. Interacts with SNL1. In terms of tissue distribution, expressed ubiquitously. Highest expression in flowers and leaves.

The protein localises to the nucleus. Binds specifically to the plant telomeric double-stranded DNA sequences. At least 2 repeats of telomeric sequences are required for binding. Induces DNA bending. This Arabidopsis thaliana (Mouse-ear cress) protein is Telomere repeat-binding protein 2 (TRP2).